Consider the following 603-residue polypeptide: ATP-dependent lipid A-core flippase (603 aa).

4 helical membrane passes run 20–40 (LGYV…FLIF), 79–99 (LVYA…LGSF), 170–190 (VFLF…MLAI), and 269–289 (PMLQ…VLWL). One can recognise an ABC transmembrane type-1 domain in the interval 31-324 (LLSIVGFLIF…LSEVSSTVQR (294 aa)). Residues 356–592 (LEVRNLSFRY…NGHYARLHAM (237 aa)) enclose the ABC transporter domain. 390–397 (GRSGSGKS) contributes to the ATP binding site.

Belongs to the ABC transporter superfamily. Lipid exporter (TC 3.A.1.106) family. As to quaternary structure, homodimer.

Its subcellular location is the cell inner membrane. It carries out the reaction ATP + H2O + lipid A-core oligosaccharideSide 1 = ADP + phosphate + lipid A-core oligosaccharideSide 2.. Involved in lipopolysaccharide (LPS) biosynthesis. Translocates lipid A-core from the inner to the outer leaflet of the inner membrane. Transmembrane domains (TMD) form a pore in the inner membrane and the ATP-binding domain (NBD) is responsible for energy generation. In Pseudomonas aeruginosa (strain ATCC 15692 / DSM 22644 / CIP 104116 / JCM 14847 / LMG 12228 / 1C / PRS 101 / PAO1), this protein is ATP-dependent lipid A-core flippase.